Here is an 89-residue protein sequence, read N- to C-terminus: Small ribosomal subunit protein uS14A (89 aa).

The protein belongs to the universal ribosomal protein uS14 family. In terms of assembly, part of the 30S ribosomal subunit. Contacts proteins S3 and S10.

Binds 16S rRNA, required for the assembly of 30S particles and may also be responsible for determining the conformation of the 16S rRNA at the A site. In Listeria welshimeri serovar 6b (strain ATCC 35897 / DSM 20650 / CCUG 15529 / CIP 8149 / NCTC 11857 / SLCC 5334 / V8), this protein is Small ribosomal subunit protein uS14A.